Consider the following 145-residue polypeptide: 3-dehydroquinate dehydratase (145 aa).

Tyrosine 22 acts as the Proton acceptor in catalysis. Residues asparagine 74, histidine 80, and aspartate 87 each contribute to the substrate site. Histidine 100 serves as the catalytic Proton donor. Substrate-binding positions include 101-102 (IS) and arginine 111.

It belongs to the type-II 3-dehydroquinase family. As to quaternary structure, homododecamer.

The catalysed reaction is 3-dehydroquinate = 3-dehydroshikimate + H2O. It participates in metabolic intermediate biosynthesis; chorismate biosynthesis; chorismate from D-erythrose 4-phosphate and phosphoenolpyruvate: step 3/7. Its function is as follows. Catalyzes a trans-dehydration via an enolate intermediate. The chain is 3-dehydroquinate dehydratase from Lachnoclostridium phytofermentans (strain ATCC 700394 / DSM 18823 / ISDg) (Clostridium phytofermentans).